The chain runs to 356 residues: Protein RecA (356 aa).

Position 71–78 (71–78) interacts with ATP; that stretch reads GPESSGKT.

This sequence belongs to the RecA family.

It localises to the cytoplasm. Functionally, can catalyze the hydrolysis of ATP in the presence of single-stranded DNA, the ATP-dependent uptake of single-stranded DNA by duplex DNA, and the ATP-dependent hybridization of homologous single-stranded DNAs. It interacts with LexA causing its activation and leading to its autocatalytic cleavage. The polypeptide is Protein RecA (Synechococcus elongatus (strain ATCC 33912 / PCC 7942 / FACHB-805) (Anacystis nidulans R2)).